Here is a 226-residue protein sequence, read N- to C-terminus: Lipoprotein signal peptidase (226 aa).

3 helical membrane-spanning segments follow: residues 12–32 (KVVA…KIWV), 69–89 (FLSL…AKLV), and 103–123 (SLII…GVIF). Residues aspartate 150 and aspartate 184 contribute to the active site. A helical membrane pass occupies residues 173–193 (FVFFHPVFNFADSCISIGLIL).

Belongs to the peptidase A8 family.

The protein resides in the cell inner membrane. It carries out the reaction Release of signal peptides from bacterial membrane prolipoproteins. Hydrolyzes -Xaa-Yaa-Zaa-|-(S,diacylglyceryl)Cys-, in which Xaa is hydrophobic (preferably Leu), and Yaa (Ala or Ser) and Zaa (Gly or Ala) have small, neutral side chains.. It participates in protein modification; lipoprotein biosynthesis (signal peptide cleavage). Functionally, this protein specifically catalyzes the removal of signal peptides from prolipoproteins. The chain is Lipoprotein signal peptidase from Porphyromonas gingivalis (strain ATCC 33277 / DSM 20709 / CIP 103683 / JCM 12257 / NCTC 11834 / 2561).